Here is a 281-residue protein sequence, read N- to C-terminus: Transcription factor lfc1 (281 aa).

Residues 60–87 (CLTCRMKKIKCDETKPTCARCTHGQREC) constitute a DNA-binding region (zn(2)-C6 fungal-type).

It is found in the nucleus. Transcription factor that acts as a negative regulator of basidioma development via repressing the expression of genes involved in basidioma development, including hydrophobins such as Hyd-1 and Hyd-8, lectins such as JRL1, as well as the fruiting body differentiation gene FVFD16. The chain is Transcription factor lfc1 from Flammulina velutipes (Agaricus velutipes).